A 351-amino-acid chain; its full sequence is Minor outer capsid protein P9 (351 aa).

The disordered stretch occupies residues 245–310; it reads GGVPAALPQP…VPSGNVSARG (66 aa). Residues 285 to 297 are compositionally biased toward basic and acidic residues; the sequence is MIRKKVETSKDGP.

This sequence belongs to the phytoreovirus minor outer capsid protein P9 family.

The protein localises to the virion. It is found in the host cytoplasm. Its function is as follows. Minor outer capsid protein. This is Minor outer capsid protein P9 from Rice dwarf virus (isolate Akita) (RDV).